The chain runs to 248 residues: PF03932 family protein CutC (248 aa).

The protein belongs to the CutC family. As to quaternary structure, homodimer.

It is found in the cytoplasm. The sequence is that of PF03932 family protein CutC from Escherichia coli O17:K52:H18 (strain UMN026 / ExPEC).